A 436-amino-acid chain; its full sequence is Trigger factor (436 aa).

The PPIase FKBP-type domain occupies 163–248 (DDRIVLDFAG…VKEVAEAVLP (86 aa)).

The protein belongs to the FKBP-type PPIase family. Tig subfamily.

The protein resides in the cytoplasm. The catalysed reaction is [protein]-peptidylproline (omega=180) = [protein]-peptidylproline (omega=0). In terms of biological role, involved in protein export. Acts as a chaperone by maintaining the newly synthesized protein in an open conformation. Functions as a peptidyl-prolyl cis-trans isomerase. This Bordetella avium (strain 197N) protein is Trigger factor.